The primary structure comprises 321 residues: 4-hydroxy-3-methylbut-2-enyl diphosphate reductase (321 aa).

[4Fe-4S] cluster is bound at residue C13. H41 and H75 together coordinate (2E)-4-hydroxy-3-methylbut-2-enyl diphosphate. Dimethylallyl diphosphate is bound by residues H41 and H75. The isopentenyl diphosphate site is built by H41 and H75. C97 provides a ligand contact to [4Fe-4S] cluster. (2E)-4-hydroxy-3-methylbut-2-enyl diphosphate is bound at residue H125. H125 contributes to the dimethylallyl diphosphate binding site. H125 is a binding site for isopentenyl diphosphate. The active-site Proton donor is E127. T168 contacts (2E)-4-hydroxy-3-methylbut-2-enyl diphosphate. Residue C225 participates in [4Fe-4S] cluster binding. Residues S253, S254, N255, and S302 each contribute to the (2E)-4-hydroxy-3-methylbut-2-enyl diphosphate site. Residues S253, S254, N255, and S302 each contribute to the dimethylallyl diphosphate site. The isopentenyl diphosphate site is built by S253, S254, N255, and S302.

The protein belongs to the IspH family. Requires [4Fe-4S] cluster as cofactor.

It catalyses the reaction isopentenyl diphosphate + 2 oxidized [2Fe-2S]-[ferredoxin] + H2O = (2E)-4-hydroxy-3-methylbut-2-enyl diphosphate + 2 reduced [2Fe-2S]-[ferredoxin] + 2 H(+). The enzyme catalyses dimethylallyl diphosphate + 2 oxidized [2Fe-2S]-[ferredoxin] + H2O = (2E)-4-hydroxy-3-methylbut-2-enyl diphosphate + 2 reduced [2Fe-2S]-[ferredoxin] + 2 H(+). It functions in the pathway isoprenoid biosynthesis; dimethylallyl diphosphate biosynthesis; dimethylallyl diphosphate from (2E)-4-hydroxy-3-methylbutenyl diphosphate: step 1/1. It participates in isoprenoid biosynthesis; isopentenyl diphosphate biosynthesis via DXP pathway; isopentenyl diphosphate from 1-deoxy-D-xylulose 5-phosphate: step 6/6. In terms of biological role, catalyzes the conversion of 1-hydroxy-2-methyl-2-(E)-butenyl 4-diphosphate (HMBPP) into a mixture of isopentenyl diphosphate (IPP) and dimethylallyl diphosphate (DMAPP). Acts in the terminal step of the DOXP/MEP pathway for isoprenoid precursor biosynthesis. The sequence is that of 4-hydroxy-3-methylbut-2-enyl diphosphate reductase from Pelodictyon phaeoclathratiforme (strain DSM 5477 / BU-1).